The primary structure comprises 106 residues: Transcriptional and immune response regulator (106 aa).

Monomer. Interacts with NOTCH2 (via ANK repeats), the interaction inhibits the nuclear translocation of NOTCH2 N2ICD. Interacts (C-terminus) with CBY1 (C-terminus), TCIM competes with CTNNB1 for the interaction with CBY1. In terms of tissue distribution, expressed in liver, expression levels decrease in regenerating liver. In bone marrow, expressed in large progenitor-like cells, cells with ring-shaped nuclei and, at lower, levels in hematopietic stem cell-like cells with round nuclei (at protein level).

Its subcellular location is the cytoplasm. The protein localises to the nucleus. The protein resides in the nucleolus. It is found in the nucleus speckle. In terms of biological role, seems to be involved in the regulation of cell growth an differentiation, may play different and opposite roles depending on the tissue or cell type. May enhance the WNT-CTNNB1 pathway by relieving antagonistic activity of CBY1. Enhances the proliferation of follicular dendritic cells. Plays a role in the mitogen-activated MAPK2/3 signaling pathway, positively regulates G1-to-S-phase transition of the cell cycle. In endothelial cells, enhances key inflammatory mediators and inflammatory response through the modulation of NF-kappaB transcriptional regulatory activity. Involved in the regulation of heat shock response, seems to play a positive feedback with HSF1 to modulate heat-shock downstream gene expression. Plays a role in the regulation of hematopoiesis even if the mechanisms are unknown. In cancers such as thyroid or lung cancer, it has been described as promoter of cell proliferation, G1-to-S-phase transition and inhibitor of apoptosis. However, it negatively regulates self-renewal of liver cancer cells via suppresion of NOTCH2 signaling. The chain is Transcriptional and immune response regulator from Mus musculus (Mouse).